The primary structure comprises 245 residues: Phosducin (245 aa).

Residues 1-67 (MEEARRQSLE…SRDDKDSKER (67 aa)) are disordered. One can recognise a Phosducin domain in the interval 1–241 (MEEARRQSLE…IHALEQTSME (241 aa)). The span at 58 to 67 (SRDDKDSKER) shows a compositional bias: basic and acidic residues. Position 73 is a phosphoserine; by PKA (S73). The segment at 111–245 (YGFVYELETG…EQTSMEEDVE (135 aa)) is thioredoxin fold.

This sequence belongs to the phosducin family. As to quaternary structure, forms a complex with the beta and gamma subunits of the GTP-binding protein, transducin. Interacts with CRX. Post-translationally, light-induced changes in cyclic nucleotide levels modulate the phosphorylation of this protein by cAMP kinase.

The protein localises to the cytoplasm. It is found in the cytosol. It localises to the nucleus. The protein resides in the cell projection. Its subcellular location is the cilium. The protein localises to the photoreceptor outer segment. It is found in the photoreceptor inner segment. May participate in the regulation of visual phototransduction or in the integration of photoreceptor metabolism. Inhibits the transcriptional activation activity of the cone-rod homeobox CRX. This Equus caballus (Horse) protein is Phosducin (PDC).